We begin with the raw amino-acid sequence, 261 residues long: Thiazole synthase (261 aa).

Lysine 95 acts as the Schiff-base intermediate with DXP in catalysis. Residues glycine 156, 182 to 183, and 204 to 205 each bind 1-deoxy-D-xylulose 5-phosphate; these read AG and NT.

The protein belongs to the ThiG family. As to quaternary structure, homotetramer. Forms heterodimers with either ThiH or ThiS.

The protein localises to the cytoplasm. The catalysed reaction is [ThiS sulfur-carrier protein]-C-terminal-Gly-aminoethanethioate + 2-iminoacetate + 1-deoxy-D-xylulose 5-phosphate = [ThiS sulfur-carrier protein]-C-terminal Gly-Gly + 2-[(2R,5Z)-2-carboxy-4-methylthiazol-5(2H)-ylidene]ethyl phosphate + 2 H2O + H(+). The protein operates within cofactor biosynthesis; thiamine diphosphate biosynthesis. Its function is as follows. Catalyzes the rearrangement of 1-deoxy-D-xylulose 5-phosphate (DXP) to produce the thiazole phosphate moiety of thiamine. Sulfur is provided by the thiocarboxylate moiety of the carrier protein ThiS. In vitro, sulfur can be provided by H(2)S. This chain is Thiazole synthase, found in Pectobacterium atrosepticum (strain SCRI 1043 / ATCC BAA-672) (Erwinia carotovora subsp. atroseptica).